A 118-amino-acid polypeptide reads, in one-letter code: Co-chaperonin GroES (118 aa).

It belongs to the GroES chaperonin family. As to quaternary structure, heptamer of 7 subunits arranged in a ring. Interacts with the chaperonin GroEL.

It localises to the cytoplasm. Together with the chaperonin GroEL, plays an essential role in assisting protein folding. The GroEL-GroES system forms a nano-cage that allows encapsulation of the non-native substrate proteins and provides a physical environment optimized to promote and accelerate protein folding. GroES binds to the apical surface of the GroEL ring, thereby capping the opening of the GroEL channel. In Helicobacter pylori (strain Shi470), this protein is Co-chaperonin GroES.